A 443-amino-acid polypeptide reads, in one-letter code: Xaa-Pro dipeptidase (443 aa).

Mn(2+) is bound by residues Asp246, Asp257, His339, Glu384, and Glu423.

The protein belongs to the peptidase M24B family. Bacterial-type prolidase subfamily. Requires Mn(2+) as cofactor.

The catalysed reaction is Xaa-L-Pro dipeptide + H2O = an L-alpha-amino acid + L-proline. Splits dipeptides with a prolyl residue in the C-terminal position. In Shigella dysenteriae serotype 1 (strain Sd197), this protein is Xaa-Pro dipeptidase.